Here is an 846-residue protein sequence, read N- to C-terminus: Pseudolaratriene synthase, chloroplastic (846 aa).

A chloroplast-targeting transit peptide spans 1–58 (MSRFTSATHGLNLSIKMPISVSQVPSIRSNTSKYELQKLRSTGRSVLQTRRQLAIINM). Residues D595, D599, and D747 each coordinate Mg(2+). A DDXXD motif motif is present at residues 595–599 (DDIYD).

This sequence belongs to the terpene synthase family. It depends on Mg(2+) as a cofactor. In terms of tissue distribution, expressed in young and mature roots. Expressed at low levels in barks.

It localises to the plastid. It is found in the chloroplast. It catalyses the reaction (2E,6E,10E)-geranylgeranyl diphosphate = pseudolaratriene + diphosphate. It functions in the pathway terpene metabolism. Its function is as follows. Converts geranylgeranyl diphosphate to an new 5,7-fused bicyclic diterpene, named pseudolaratriene. Catalyzes the first committed step in pseudolaric acid B (PAB) biosynthesis. PAB exhibits antiproliferative activity by inhibiting microtubule polymerization, and has demonstrated antitumor properties against several cancer types. This is Pseudolaratriene synthase, chloroplastic from Pseudolarix amabilis (Golden larch).